We begin with the raw amino-acid sequence, 355 residues long: MVREKVRVSTRTLQWKCVESREDSKRLYYGRFILSPLRKGQADTIAIGIRRALLGEIEGTCITRVKSKNVPHEYSTIAGIQESVHEILMNFKEIVLRSNLYGTCDASICVRGPGYVTAQDIILPPYVEIVDNTQHIASLTEPIDLCIGLQIERNRGYLMKMPHNSQDGSYPIDAVFMPVRNANHSIHSYGSGNEKHEILFLEIWTNGSLTPKEALHEACRNLIDLFIPFLHKEEETSPLEDNHHTVPLSPLTFHDKADKLRKRKKEIKKKIALKSIFIDQSELPKVYNCLKGSNLYTLLDLLNKSQEDLMKMEHLRLEDVNHILVILARKHFAIYLPNKKFEIDFEIYCYSIFFH.

Residues 1 to 233 (MVREKVRVST…DLFIPFLHKE (233 aa)) form an alpha N-terminal domain (alpha-NTD) region. The alpha C-terminal domain (alpha-CTD) stretch occupies residues 268 to 355 (KKKIALKSIF…EIYCYSIFFH (88 aa)).

This sequence belongs to the RNA polymerase alpha chain family. In terms of assembly, in plastids the minimal PEP RNA polymerase catalytic core is composed of four subunits: alpha, beta, beta', and beta''. When a (nuclear-encoded) sigma factor is associated with the core the holoenzyme is formed, which can initiate transcription.

It localises to the plastid. The protein localises to the chloroplast. It catalyses the reaction RNA(n) + a ribonucleoside 5'-triphosphate = RNA(n+1) + diphosphate. In terms of biological role, DNA-dependent RNA polymerase catalyzes the transcription of DNA into RNA using the four ribonucleoside triphosphates as substrates. The polypeptide is DNA-directed RNA polymerase subunit alpha (Jasminum nudiflorum (Winter jasmine)).